The primary structure comprises 388 residues: Protein-glutamate methylesterase/protein-glutamine glutaminase 4 (388 aa).

Positions 4–121 (KVLVVDDSGF…SGDASKIKRL (118 aa)) constitute a Response regulatory domain. Asp-55 bears the 4-aspartylphosphate mark. The disordered stretch occupies residues 137 to 196 (SGASAPASVPQPAKPAAPIPVREPPKPAAPVTRPAEPRAKAPPAKPEPKPEVKAAKSRRT). Positions 148-164 (PAKPAAPIPVREPPKPA) are enriched in pro residues. In terms of domain architecture, CheB-type methylesterase spans 197–388 (PRQDYKVVLI…FAPRLIDGVG (192 aa)). Active-site residues include Ser-209, His-236, and Asp-332.

Belongs to the CheB family. In terms of processing, phosphorylated by CheA. Phosphorylation of the N-terminal regulatory domain activates the methylesterase activity.

Its subcellular location is the cytoplasm. It carries out the reaction [protein]-L-glutamate 5-O-methyl ester + H2O = L-glutamyl-[protein] + methanol + H(+). The enzyme catalyses L-glutaminyl-[protein] + H2O = L-glutamyl-[protein] + NH4(+). Its function is as follows. Involved in chemotaxis. Part of a chemotaxis signal transduction system that modulates chemotaxis in response to various stimuli. Catalyzes the demethylation of specific methylglutamate residues introduced into the chemoreceptors (methyl-accepting chemotaxis proteins or MCP) by CheR. Also mediates the irreversible deamidation of specific glutamine residues to glutamic acid. This Hahella chejuensis (strain KCTC 2396) protein is Protein-glutamate methylesterase/protein-glutamine glutaminase 4.